The chain runs to 126 residues: Cystatin-C (126 aa).

Residues 1–18 (MKMLVFPVLAALFAVGLG) form the signal peptide. In terms of domain architecture, Cystatin spans 22–115 (GAPRDINISE…CTFSVWSRPW (94 aa)). A Secondary area of contact motif is present at residues 64-68 (QVVSG). 2 disulfide bridges follow: cysteine 82–cysteine 92 and cysteine 106–cysteine 126.

Belongs to the cystatin family. Ubiquitously expressed in normal tissues including brain, eye, gill, heart, gullet, liver, spleen, stomach, pyloric ceca, intestine, kidney and muscle. Expressed, but not up-regulated, in lipopolysaccharide (LPS)-stimulated tissues including kidney, spleen, muscle and gill.

The protein localises to the secreted. Thiol protease inhibitor. Has high papain inhibitory activity and inhibits to a lesser extent fish cathepsins L, S, K, F, X and bovine cathepsin B in vitro. This Paralichthys olivaceus (Bastard halibut) protein is Cystatin-C.